We begin with the raw amino-acid sequence, 464 residues long: Siroheme synthase (464 aa).

The tract at residues 1–203 (MEFLPLFHNL…GQGAEAERML (203 aa)) is precorrin-2 dehydrogenase /sirohydrochlorin ferrochelatase. Residues 22-23 (EI) and 43-44 (PE) each bind NAD(+). Ser-128 carries the post-translational modification Phosphoserine. The interval 216-464 (GEVYLVGAGP…AWFEGAQATL (249 aa)) is uroporphyrinogen-III C-methyltransferase. Position 225 (Pro-225) interacts with S-adenosyl-L-methionine. The active-site Proton acceptor is Asp-248. Catalysis depends on Lys-270, which acts as the Proton donor. S-adenosyl-L-methionine-binding positions include 301–303 (GGD), Ile-306, 331–332 (TA), Met-383, and Gly-412.

It in the N-terminal section; belongs to the precorrin-2 dehydrogenase / sirohydrochlorin ferrochelatase family. The protein in the C-terminal section; belongs to the precorrin methyltransferase family.

It carries out the reaction uroporphyrinogen III + 2 S-adenosyl-L-methionine = precorrin-2 + 2 S-adenosyl-L-homocysteine + H(+). The catalysed reaction is precorrin-2 + NAD(+) = sirohydrochlorin + NADH + 2 H(+). The enzyme catalyses siroheme + 2 H(+) = sirohydrochlorin + Fe(2+). It functions in the pathway cofactor biosynthesis; adenosylcobalamin biosynthesis; precorrin-2 from uroporphyrinogen III: step 1/1. The protein operates within cofactor biosynthesis; adenosylcobalamin biosynthesis; sirohydrochlorin from precorrin-2: step 1/1. Its pathway is porphyrin-containing compound metabolism; siroheme biosynthesis; precorrin-2 from uroporphyrinogen III: step 1/1. It participates in porphyrin-containing compound metabolism; siroheme biosynthesis; siroheme from sirohydrochlorin: step 1/1. It functions in the pathway porphyrin-containing compound metabolism; siroheme biosynthesis; sirohydrochlorin from precorrin-2: step 1/1. Its function is as follows. Multifunctional enzyme that catalyzes the SAM-dependent methylations of uroporphyrinogen III at position C-2 and C-7 to form precorrin-2 via precorrin-1. Then it catalyzes the NAD-dependent ring dehydrogenation of precorrin-2 to yield sirohydrochlorin. Finally, it catalyzes the ferrochelation of sirohydrochlorin to yield siroheme. In Pseudomonas syringae pv. syringae (strain B728a), this protein is Siroheme synthase.